Reading from the N-terminus, the 332-residue chain is Caffeoylshikimate esterase (332 aa).

Residues Met1 to Pro13 show a composition bias toward low complexity. The tract at residues Met1–Met26 is disordered. Ser147 acts as the Nucleophile in catalysis. Catalysis depends on charge relay system residues Asp268 and His298.

This sequence belongs to the AB hydrolase superfamily. Monoacylglycerol lipase family. As to quaternary structure, interacts with ACBP2. Expressed in vasculature of roots and leaves, stems, flowers and siliques.

It is found in the cell membrane. It catalyses the reaction 5-O-[(E)-caffeoyl]-shikimate + H2O = shikimate + (E)-caffeate + H(+). Its function is as follows. Esterase involved in the biosynthesis of lignin. Hydrolyzes caffeoylshikimate into caffeate and shikimate. Together with 4-coumarate--CoA ligase (4CL), acts on an alternative reaction for the formation of caffeoyl-CoA and bypasses the second reaction of shikimate O-hydroxycinnamoyltransferase (HST). Also accepts 4-coumaroylshikimate as substrate, but with lower activity. According to PubMed:20345607 and PubMed:22915575, possesses monoacylglycerol O-acyltransferase, monoacylglycerol lipase and lysophospholipase activities in vitro. With the association of ACBP2, may promote the degradation of lysophosphatidylcholine and detoxify the peroxidized membrane in response to cadmium-induced oxidative stress. However these results require additional confirmation in vivo. This Arabidopsis thaliana (Mouse-ear cress) protein is Caffeoylshikimate esterase (CSE).